We begin with the raw amino-acid sequence, 197 residues long: dTTP/UTP pyrophosphatase (197 aa).

Asp-70 acts as the Proton acceptor in catalysis.

This sequence belongs to the Maf family. YhdE subfamily. The cofactor is a divalent metal cation.

Its subcellular location is the cytoplasm. The enzyme catalyses dTTP + H2O = dTMP + diphosphate + H(+). The catalysed reaction is UTP + H2O = UMP + diphosphate + H(+). Its function is as follows. Nucleoside triphosphate pyrophosphatase that hydrolyzes dTTP and UTP. May have a dual role in cell division arrest and in preventing the incorporation of modified nucleotides into cellular nucleic acids. This chain is dTTP/UTP pyrophosphatase, found in Pectobacterium atrosepticum (strain SCRI 1043 / ATCC BAA-672) (Erwinia carotovora subsp. atroseptica).